Consider the following 456-residue polypeptide: Hydroxymethylglutaryl-CoA synthase ERG13 (456 aa).

Ala-35 contributes to the (3S)-3-hydroxy-3-methylglutaryl-CoA binding site. Glu-86 functions as the Proton donor/acceptor in the catalytic mechanism. (3S)-3-hydroxy-3-methylglutaryl-CoA is bound by residues Cys-118, Asn-156, Thr-160, Ser-210, His-259, Lys-268, Asn-336, and Ser-370. Cys-118 acts as the Acyl-thioester intermediate in catalysis. His-259 (proton donor/acceptor) is an active-site residue.

Belongs to the thiolase-like superfamily. HMG-CoA synthase family.

The enzyme catalyses acetoacetyl-CoA + acetyl-CoA + H2O = (3S)-3-hydroxy-3-methylglutaryl-CoA + CoA + H(+). It participates in metabolic intermediate biosynthesis; (R)-mevalonate biosynthesis; (R)-mevalonate from acetyl-CoA: step 2/3. Functionally, hydroxymethylglutaryl-CoA synthase; part of the first module of ergosterol biosynthesis pathway that includes the early steps of the pathway, conserved across all eukaryotes, and which results in the formation of mevalonate from acetyl-coenzyme A (acetyl-CoA). ERG13 condenses acetyl-CoA with acetoacetyl-CoA to form hydroxymethylglutaryl-CoA (HMG-CoA). The first module starts with the action of the cytosolic acetyl-CoA acetyltransferase ERG10B that catalyzes the formation of acetoacetyl-CoA. The hydroxymethylglutaryl-CoA synthases ERG13 then condenses acetyl-CoA with acetoacetyl-CoA to form HMG-CoA. The rate-limiting step of the early module is the reduction to mevalonate by the 3-hydroxy-3-methylglutaryl-coenzyme A (HMG-CoA) reductases HMG1. This Gibberella zeae (strain ATCC MYA-4620 / CBS 123657 / FGSC 9075 / NRRL 31084 / PH-1) (Wheat head blight fungus) protein is Hydroxymethylglutaryl-CoA synthase ERG13.